Consider the following 104-residue polypeptide: Synaptic plasticity regulator PANTS (104 aa).

Residues 58–104 are disordered; it reads RRSAEAQADSLPPGPEGEPRVAGAGPNAVTGILTRNQGTERPHGDTR. Residues 95-104 are compositionally biased toward basic and acidic residues; it reads GTERPHGDTR.

The protein belongs to the UPF0545 family. In terms of assembly, interacts with RTN4 isoform A/Nogo-A; the interaction results in enhanced RTN4-mediated inhibition of AMPA receptor clustering. Also interacts with NCAM1, RANBP2 and CCT8. Rapidly degraded by proteolysis following neuronal stimulation, resulting in increased AMPA receptor clustering.

It localises to the synapse. The protein resides in the synaptic cleft. Its function is as follows. Negatively regulates long-term potentiation and modulates adult synaptic plasticity. Stabilizes the interaction of RTN4 isoform A/Nogo-A with its receptors, inhibiting clustering of postsynaptic AMPA receptors at synaptic sites. Upon neuronal stimulation, degraded at synapses, reducing RTN4 signaling and allowing AMPA receptor clustering at individual synapses. In Bos taurus (Bovine), this protein is Synaptic plasticity regulator PANTS.